The primary structure comprises 193 residues: Acyl carrier protein phosphodiesterase (193 aa).

It belongs to the AcpH family.

The catalysed reaction is holo-[ACP] + H2O = apo-[ACP] + (R)-4'-phosphopantetheine + H(+). Converts holo-ACP to apo-ACP by hydrolytic cleavage of the phosphopantetheine prosthetic group from ACP. The protein is Acyl carrier protein phosphodiesterase of Salmonella dublin (strain CT_02021853).